Here is a 427-residue protein sequence, read N- to C-terminus: Enolase (427 aa).

Glutamine 163 serves as a coordination point for (2R)-2-phosphoglycerate. Glutamate 205 serves as the catalytic Proton donor. Aspartate 242, glutamate 285, and aspartate 312 together coordinate Mg(2+). Residues lysine 337, arginine 366, serine 367, and lysine 388 each contribute to the (2R)-2-phosphoglycerate site. Lysine 337 acts as the Proton acceptor in catalysis.

The protein belongs to the enolase family. It depends on Mg(2+) as a cofactor.

The protein localises to the cytoplasm. Its subcellular location is the secreted. The protein resides in the cell surface. It carries out the reaction (2R)-2-phosphoglycerate = phosphoenolpyruvate + H2O. It functions in the pathway carbohydrate degradation; glycolysis; pyruvate from D-glyceraldehyde 3-phosphate: step 4/5. Functionally, catalyzes the reversible conversion of 2-phosphoglycerate (2-PG) into phosphoenolpyruvate (PEP). It is essential for the degradation of carbohydrates via glycolysis. In Rhodopseudomonas palustris (strain TIE-1), this protein is Enolase.